Reading from the N-terminus, the 202-residue chain is ATP-dependent Clp protease proteolytic subunit (202 aa).

S98 (nucleophile) is an active-site residue. H123 is a catalytic residue.

This sequence belongs to the peptidase S14 family. In terms of assembly, fourteen ClpP subunits assemble into 2 heptameric rings which stack back to back to give a disk-like structure with a central cavity, resembling the structure of eukaryotic proteasomes.

The protein resides in the cytoplasm. It catalyses the reaction Hydrolysis of proteins to small peptides in the presence of ATP and magnesium. alpha-casein is the usual test substrate. In the absence of ATP, only oligopeptides shorter than five residues are hydrolyzed (such as succinyl-Leu-Tyr-|-NHMec, and Leu-Tyr-Leu-|-Tyr-Trp, in which cleavage of the -Tyr-|-Leu- and -Tyr-|-Trp bonds also occurs).. Functionally, cleaves peptides in various proteins in a process that requires ATP hydrolysis. Has a chymotrypsin-like activity. Plays a major role in the degradation of misfolded proteins. This chain is ATP-dependent Clp protease proteolytic subunit, found in Magnetococcus marinus (strain ATCC BAA-1437 / JCM 17883 / MC-1).